A 243-amino-acid chain; its full sequence is ABC transporter arginine-binding protein 1 (243 aa).

A signal peptide spans 1–19; the sequence is MKKLVLAALLASFTFGASA.

Belongs to the bacterial solute-binding protein 3 family. The complex is composed of two ATP-binding proteins (ArtP), two transmembrane proteins (ArtM and ArtQ) and two solute-binding proteins (ArtJ and ArtI).

It localises to the periplasm. Part of the ABC transporter complex ArtPIQMJ involved in arginine transport. Binds L-arginine with high affinity. This chain is ABC transporter arginine-binding protein 1 (artJ), found in Escherichia coli (strain K12).